A 445-amino-acid chain; its full sequence is Ubiquitin carboxyl-terminal hydrolase 11 (445 aa).

Positions 1–412 (NSARADLCVA…AAYVLFYQRQ (412 aa)) constitute a USP domain. A disordered region spans residues 127–194 (RPSSDDEDDG…GPSHWPQRAR (68 aa)). Residue Ser-130 is modified to Phosphoserine. Acidic residues predominate over residues 131 to 140 (DDEDDGDEKD). His-362 (nucleophile) is an active-site residue. Residue His-370 is the Proton acceptor of the active site. Residues 416–445 (RRLQPQPSSSDPPASPACGSPPNSEFMDVN) are disordered. Residues 420–439 (PQPSSSDPPASPACGSPPNS) are compositionally biased toward low complexity. Ser-430 bears the Phosphoserine mark.

Belongs to the peptidase C19 family. In terms of assembly, monomer. Interacts with RANBP9/RANBPM. Interacts with BRCA2. Interacts with CHUK/IKKA. Interacts with NFKBIA. Associated component of the Polycomb group (PcG) multiprotein PRC1-like complex.

It is found in the nucleus. Its subcellular location is the cytoplasm. The protein localises to the chromosome. The catalysed reaction is Thiol-dependent hydrolysis of ester, thioester, amide, peptide and isopeptide bonds formed by the C-terminal Gly of ubiquitin (a 76-residue protein attached to proteins as an intracellular targeting signal).. Protease that can remove conjugated ubiquitin from target proteins and polyubiquitin chains. Inhibits the degradation of target proteins by the proteasome. Cleaves preferentially 'Lys-6' and 'Lys-63'-linked ubiquitin chains. Has lower activity with 'Lys-11' and 'Lys-33'-linked ubiquitin chains, and extremely low activity with 'Lys-27', 'Lys-29' and 'Lys-48'-linked ubiquitin chains (in vitro). Plays a role in the regulation of pathways leading to NF-kappa-B activation. Plays a role in the regulation of DNA repair after double-stranded DNA breaks. Acts as a chromatin regulator via its association with the Polycomb group (PcG) multiprotein PRC1-like complex; may act by deubiquitinating components of the PRC1-like complex. Promotes cell proliferation by deubiquitinating phosphorylated E2F1. In Canis lupus familiaris (Dog), this protein is Ubiquitin carboxyl-terminal hydrolase 11 (USP11).